We begin with the raw amino-acid sequence, 111 residues long: Flagellar hook-basal body complex protein FliE (111 aa).

The protein belongs to the FliE family.

It localises to the bacterial flagellum basal body. This chain is Flagellar hook-basal body complex protein FliE, found in Brucella ovis (strain ATCC 25840 / 63/290 / NCTC 10512).